A 595-amino-acid polypeptide reads, in one-letter code: Probable inactive glycosyltransferase 25 family member 3 (595 aa).

An N-terminal signal peptide occupies residues 1 to 24 (MRAAPAAPLLQLLLLLGPRPEAAG). Asparagine 75, asparagine 153, asparagine 237, and asparagine 360 each carry an N-linked (GlcNAc...) asparagine glycan. The disordered stretch occupies residues 576-595 (RLDLAGGSGHSLRPHPRDEL). Residues 592–595 (RDEL) carry the Prevents secretion from ER motif.

Belongs to the glycosyltransferase 25 family.

It localises to the endoplasmic reticulum lumen. Functionally, probable cell adhesion protein involved in leukocyte transmigration across the blood-brain barrier. Does not express any beta-galactosyltransferase activity in vitro. The polypeptide is Probable inactive glycosyltransferase 25 family member 3 (CERCAM) (Bos taurus (Bovine)).